Reading from the N-terminus, the 73-residue chain is Serine rich endogenous peptide 1 (73 aa).

The signal sequence occupies residues 1–28 (MGMSGSSGLVHVLMLLLLLSILFHHTES). The interval 48–73 (YKPNTAVETPPSRSRRGGGGQNTGAD) is disordered. Positions 53-67 (AVETPPSRSRRGGGG) match the SCOOP motif motif. The short motif at 59–61 (SRS) is the SxS motif essential for MIK2 binding element. The span at 64 to 73 (GGGGQNTGAD) shows a compositional bias: gly residues.

Belongs to the serine rich endogenous peptide (SCOOP) phytocytokine family. In terms of assembly, interacts with MIK2 (via extracellular leucine-rich repeat domain); this interaction triggers the formation of complex between MIK2 and the BAK1/SERK3 and SERK4 coreceptors, and subsequent BAK1 activation by phosphorylation. As to expression, mostly expressed in leaves and flowers, and, to a lower extent, in seedlings shoots.

The protein resides in the cell membrane. It localises to the secreted. The protein localises to the extracellular space. Its subcellular location is the apoplast. Functionally, brassicaceae-specific phytocytokine (plant endogenous peptide released into the apoplast) perceived by MIK2 in a BAK1/SERK3 and SERK4 coreceptors-dependent manner, that modulates various physiological and antimicrobial processes including growth prevention and reactive oxygen species (ROS) response regulation. The polypeptide is Serine rich endogenous peptide 1 (Arabidopsis thaliana (Mouse-ear cress)).